A 328-amino-acid chain; its full sequence is Tetraacyldisaccharide 4'-kinase (328 aa).

ATP is bound at residue 55-62 (TAGGNGKT).

The protein belongs to the LpxK family.

It catalyses the reaction a lipid A disaccharide + ATP = a lipid IVA + ADP + H(+). It functions in the pathway glycolipid biosynthesis; lipid IV(A) biosynthesis; lipid IV(A) from (3R)-3-hydroxytetradecanoyl-[acyl-carrier-protein] and UDP-N-acetyl-alpha-D-glucosamine: step 6/6. In terms of biological role, transfers the gamma-phosphate of ATP to the 4'-position of a tetraacyldisaccharide 1-phosphate intermediate (termed DS-1-P) to form tetraacyldisaccharide 1,4'-bis-phosphate (lipid IVA). In Yersinia enterocolitica serotype O:8 / biotype 1B (strain NCTC 13174 / 8081), this protein is Tetraacyldisaccharide 4'-kinase.